The chain runs to 139 residues: 3-hydroxyacyl-[acyl-carrier-protein] dehydratase FabZ (139 aa).

Residue H47 is part of the active site.

This sequence belongs to the thioester dehydratase family. FabZ subfamily.

It localises to the cytoplasm. The catalysed reaction is a (3R)-hydroxyacyl-[ACP] = a (2E)-enoyl-[ACP] + H2O. Involved in unsaturated fatty acids biosynthesis. Catalyzes the dehydration of short chain beta-hydroxyacyl-ACPs and long chain saturated and unsaturated beta-hydroxyacyl-ACPs. This chain is 3-hydroxyacyl-[acyl-carrier-protein] dehydratase FabZ, found in Oenococcus oeni (strain ATCC BAA-331 / PSU-1).